Here is a 553-residue protein sequence, read N- to C-terminus: Solute carrier family 22 member 12 (553 aa).

Residues 9-29 (LVGGLGRFQVLQTMALMVSIM) traverse the membrane as a helical segment. N-linked (GlcNAc...) asparagine glycosylation is found at Asn-56 and Asn-102. 11 helical membrane-spanning segments follow: residues 146 to 166 (PMAQSIYLAGILVGAAACGPA), 174 to 194 (LVLTWSYLQMAVMGTAAAFAP), 195 to 215 (AFPVYCLFRFLLAFAVAGVMM), 232 to 252 (LVMTLNSLGFSFGHGLTAAVA), 260 to 280 (LLQLVVSVPFFLCFLYSWWLA), 351 to 371 (CISTLCWFAFGFTFFGLALDL), 378 to 398 (IFLLQMFIGVVDIPAKMGALL), 407 to 427 (PTLAASLLLAGLCILANTLVP), 435 to 455 (SALAVLGLGGVGAAFTCITIY), 466 to 486 (MTAVGLGQMAARGGAILGPLV), and 495 to 515 (WLPLLVYGTVPVLSGLAALLL). At Thr-542 the chain carries Phosphothreonine.

This sequence belongs to the major facilitator (TC 2.A.1) superfamily. Organic cation transporter (TC 2.A.1.19) family. Interacts with PDZK1. In terms of processing, N-glycosylated. As to expression, detected in kidney (at protein level). Detected in fetal and adult kidney. Detected in epithelial cells of proximal tubules in renal cortex.

Its subcellular location is the apical cell membrane. It catalyses the reaction urate(out) + (S)-lactate(in) = urate(in) + (S)-lactate(out). It carries out the reaction nicotinate(in) + urate(out) = nicotinate(out) + urate(in). The catalysed reaction is urate(out) + n chloride(in) = urate(in) + n chloride(out). The enzyme catalyses orotate(out) + nicotinate(in) = orotate(in) + nicotinate(out). Electroneutral antiporter that translocates urate across the apical membrane of proximal tubular cells in exchange for monovalent organic or inorganic anions. Involved in renal reabsorption of urate and helps maintaining blood levels of uric acid. Mediates urate uptake by an exchange with organic anions such as (S)-lactate and nicotinate, and inorganic anion Cl(-). Other inorganic anions such as Br(-), I(-) and NO3(-) may also act as counteranions that exchange for urate. Also mediates orotate tubular uptake coupled with nicotinate efflux and to a lesser extent with lactate efflux, therefore displaying a potential role in orotate renal reabsorption. Orotate transport is Cl(-)-dependent. In Homo sapiens (Human), this protein is Solute carrier family 22 member 12.